The chain runs to 809 residues: Leucine--tRNA ligase (809 aa).

The short motif at 40 to 50 is the 'HIGH' region element; the sequence is PYPSGRIHMGH. The 'KMSKS' region signature appears at 579 to 583; that stretch reads KMSKS. K582 contributes to the ATP binding site.

It belongs to the class-I aminoacyl-tRNA synthetase family.

It is found in the cytoplasm. It catalyses the reaction tRNA(Leu) + L-leucine + ATP = L-leucyl-tRNA(Leu) + AMP + diphosphate. The polypeptide is Leucine--tRNA ligase (Campylobacter lari (strain RM2100 / D67 / ATCC BAA-1060)).